A 115-amino-acid chain; its full sequence is uncharacterized protein (115 aa).

This is an uncharacterized protein from Homo sapiens (Human).